Consider the following 929-residue polypeptide: MTDYSKTVNLLESPFPMRGNLAKREPAWLKSWYEQKRYQKLREIAKGRPKFILHDGPPYANGDIHIGHAVNKILKDIIIRSKTQAGFDAPYVPGWDCHGLPIEVMVEKLHGKDMPKARFRELCREYAAEQIARQKKDFIRLGVLGDWDNPYLTMDFKTEADTVRMLGEIYKSGYLYRGAKPVQFCLDCGSSLAEAEVEYKDKVSPAIDVGYPFKDTAALATAFGLAGIEGKAFAVIWTTTPWTLPASQAVSAGADVVYQLIDTPTGKLVLAKDLAEDALKRYGFSDGIAILAETTGDKLENLHMNHPFLERDIPMLNGEHVTTDAGTGLVHTAPAHGLEDYAVCNKYGIELYNPVNAEGKYIGETPRVAGMRVWEANSVILQWLEETGNLLASSKIEHSYAHCWRHKTPLIYRATGQWFVGMDKAGADGKTLRDKAIKAVDDTEFFPSWGRARLEAMIEGRPDWVVSRQRYWGTPMTFFVHKETGELHPNSAELLEKVAQRIEEKGIEAWFSLDKGELLSAEDCEHYDKLSDTMDVWFDSGSTHYSVLKQREELDWPADLYLEGSDQHRGWFQSSMLTGCASSMGRAPYKQLLTHGFVVDQNGRKMSKSIGNVVAPQEVYNEFGADILRLWAASTDYSGELAISKEILKRVTESYRRIRNTLSFLFANLSDFNPIEDAVQQADMVEIDRYALVLARRLQERVAGDFYPRYAFHFAVKEMVSFCSEDLGAFYLDILKDRLYTTKADSRARRSAQTALYHITRSLVLLIAPILCFTGEEAWDIIGGGAEDSVLFHTWHEFPTINEKAEAELVKKWTAIREAREAVTAAIEPLRADKTVGSSLQAEAEITAPEEMAGYLNALGEELRFALLVSKAEVKVGSELAVAAKASDGEKCERCWHYTRDVGAVAGHETVCKRCAENVGGEGETRHYA.

The short motif at 58–68 (PYANGDIHIGH) is the 'HIGH' region element. Glu563 provides a ligand contact to L-isoleucyl-5'-AMP. Positions 605–609 (KMSKS) match the 'KMSKS' region motif. Lys608 is a binding site for ATP. Residues Cys892, Cys895, Cys912, and Cys915 each coordinate Zn(2+).

Belongs to the class-I aminoacyl-tRNA synthetase family. IleS type 1 subfamily. Monomer. Zn(2+) serves as cofactor.

The protein localises to the cytoplasm. It carries out the reaction tRNA(Ile) + L-isoleucine + ATP = L-isoleucyl-tRNA(Ile) + AMP + diphosphate. Functionally, catalyzes the attachment of isoleucine to tRNA(Ile). As IleRS can inadvertently accommodate and process structurally similar amino acids such as valine, to avoid such errors it has two additional distinct tRNA(Ile)-dependent editing activities. One activity is designated as 'pretransfer' editing and involves the hydrolysis of activated Val-AMP. The other activity is designated 'posttransfer' editing and involves deacylation of mischarged Val-tRNA(Ile). In Neisseria meningitidis serogroup A / serotype 4A (strain DSM 15465 / Z2491), this protein is Isoleucine--tRNA ligase.